The following is a 242-amino-acid chain: Glutathione S-transferase 3 (242 aa).

The region spanning methionine 1 to phenylalanine 79 is the GST N-terminal domain. The GST C-terminal domain occupies aspartate 85–proline 234. Residue serine 228 is modified to Phosphoserine. Threonine 232 is subject to Phosphothreonine.

The protein belongs to the GST superfamily. As to quaternary structure, interacts with sad1.

The protein localises to the cytoplasm. The enzyme catalyses RX + glutathione = an S-substituted glutathione + a halide anion + H(+). Functionally, may have a role in the detoxification of various heavy metals. In Schizosaccharomyces pombe (strain 972 / ATCC 24843) (Fission yeast), this protein is Glutathione S-transferase 3 (gst3).